Consider the following 661-residue polypeptide: Pentatricopeptide repeat-containing protein At5g66631 (661 aa).

PPR repeat units lie at residues 139–173, 176–210, 211–245, 246–280, 410–444, 445–475, 484–518, 519–553, and 554–588; these read VHFS…GEEK, CTES…GGIP, NSRT…RITR, TLKH…GKFP, DAYT…GIKL, PFST…DRTL, LMLL…GVSP, DIQT…GLEP, and DPYM…NLMP.

This sequence belongs to the PPR family. P subfamily.

The chain is Pentatricopeptide repeat-containing protein At5g66631 from Arabidopsis thaliana (Mouse-ear cress).